Here is a 342-residue protein sequence, read N- to C-terminus: S-adenosyl-L-methionine-dependent tRNA 4-demethylwyosine synthase (342 aa).

[4Fe-4S] cluster contacts are provided by Cys45, Cys58, Cys71, Cys81, Cys85, and Cys88. The Radical SAM core domain maps to 64-312 (YGIHSHRCLQ…VKHLPGYHIE (249 aa)).

Belongs to the TYW1 family. In terms of assembly, monomer. [4Fe-4S] cluster serves as cofactor.

Its subcellular location is the cytoplasm. It catalyses the reaction N(1)-methylguanosine(37) in tRNA(Phe) + pyruvate + S-adenosyl-L-methionine = 4-demethylwyosine(37) in tRNA(Phe) + 5'-deoxyadenosine + L-methionine + CO2 + H2O. Its function is as follows. Component of the wyosine derivatives biosynthesis pathway that catalyzes the condensation of N-methylguanine with 2 carbon atoms from pyruvate to form the tricyclic 4-demethylwyosine (imG-14) on guanosine-37 of tRNA(Phe). This chain is S-adenosyl-L-methionine-dependent tRNA 4-demethylwyosine synthase, found in Pyrococcus abyssi (strain GE5 / Orsay).